A 489-amino-acid chain; its full sequence is Threonine/serine exporter (489 aa).

10 consecutive transmembrane segments (helical) span residues 151 to 171 (GFPV…VLLG), 174 to 194 (WQVS…TSFL), 206 to 226 (VVGG…ALQF), 233 to 253 (SQII…VQSL), 268 to 288 (FFET…GIQL), 314 to 334 (IIAG…EWSS), 335 to 355 (VIIA…FVVY), 356 to 376 (LGPV…GGLL), 381 to 401 (LIPP…GLAI), and 420 to 440 (IAVA…GEWI). The disordered stretch occupies residues 464-489 (FQEEAEQNQRRQRKRPKTNQRFGNKR). The span at 473 to 489 (RRQRKRPKTNQRFGNKR) shows a compositional bias: basic residues.

It belongs to the ThrE exporter (TC 2.A.79) family.

The protein resides in the cell membrane. The catalysed reaction is L-threonine(in) + H(+)(out) = L-threonine(out) + H(+)(in). Transport is inhibited by the proton ionophore carbonyl cyanide m-chlorophenylhydrazone (CCCP). In terms of biological role, catalyzes the export of L-threonine and L-serine from the cell to the extracellular environment. Export is dependent on the proton motive force. This is Threonine/serine exporter from Corynebacterium glutamicum (Brevibacterium saccharolyticum).